The chain runs to 371 residues: Putative RING finger protein ORF117 (371 aa).

The RING-type zinc finger occupies 72-108 (CCICFRKDVIYKEVPCGHYICVECYKEPIRNVCPECN). A compositionally biased stretch (acidic residues) spans 178-192 (EEEMNESEAEEEEPV). Residues 178–218 (EEEMNESEAEEEEPVPEIAQFEALNTPPPPPTNRRPKIRRP) are disordered.

This chain is Putative RING finger protein ORF117, found in Magallana gigas (Pacific oyster).